Reading from the N-terminus, the 266-residue chain is 14-3-3 protein homolog (266 aa).

The disordered stretch occupies residues 154-177 (KQAADQAQESYQKATETAEGHSPA). Polar residues predominate over residues 158 to 168 (DQAQESYQKAT).

The protein belongs to the 14-3-3 family.

This Neospora caninum (Coccidian parasite) protein is 14-3-3 protein homolog.